The primary structure comprises 833 residues: ERAD-associated E3 ubiquitin-protein ligase component HRD3 (833 aa).

An N-terminal signal peptide occupies residues 1 to 20 (MITLLLYLCVICNAIVLIRA). N-linked (GlcNAc...) asparagine glycans are attached at residues Asn101, Asn123, and Asn142. The stretch at 103 to 139 (SEATYTLSQIHLWSQYNFPHNMTLAHKYLEKFNDLTH) is one Sel1-like 1 repeat. Sel1-like repeat units lie at residues 143–186 (HSAI…QLGN), 187–222 (LKAK…EQLR), 413–445 (GRAC…KTQA), 552–595 (ETAQ…KQGN), 596–627 (IDAG…LKYS), and 628–663 (IQAI…EHDH). Asn429 is a glycosylation site (N-linked (GlcNAc...) asparagine). The N-linked (GlcNAc...) asparagine glycan is linked to Asn611. Residues 768-788 (LVTMGCILGIFLLSILMSTLA) traverse the membrane as a helical segment. The segment at 805 to 824 (NGNRQQEQQQQQQAQGPPGW) is disordered. The segment covering 809 to 819 (QQEQQQQQQAQ) has biased composition (low complexity).

Belongs to the sel-1 family. In terms of assembly, component of the HRD1 ubiquitin ligase complex which contains the E3 ligase HRD1, its cofactors HRD3, USA1 and DER1, substrate recruiting factor YOS9 and CDC48-binding protein UBX2. Within the complex, interacts directly with HRD1 and YOS9 (via N-terminus). In ERAD-L, HRD3 and YOS9 jointly bind misfolded glycoproteins in the endoplasmic reticulum (ER) lumen. Movement of ERAD-L substrates through the ER membrane is facilitated by HRD1 and DER1 which have lateral gates facing each other and which distort the membrane region between the lateral gates, making it much thinner than a normal phospholipid bilayer. Substrates insert into the membrane as a hairpin loop with one strand interacting with DER1 and the other with HRD1. The HRD1 complex interacts with the heterotrimeric CDC48-NPL4-UFD1 ATPase complex which is recruited by UBX2 via its interaction with CDC48 and which moves ubiquitinated substrates to the cytosol for targeting to the proteasome. The HRD1 complex interacts with the ERAD substrates HMG1 and HMG2. Interacts with KAR2.

It localises to the endoplasmic reticulum membrane. Functionally, component of the endoplasmic reticulum quality control (ERQC) system involved in ubiquitin-dependent degradation of misfolded endoplasmic reticulum proteins. Component of the HRD1 ubiquitin ligase complex, which is part of the ERAD-L and ERAD-M pathways responsible for the rapid degradation of soluble lumenal and membrane proteins with misfolded lumenal domains (ERAD-L), or ER-membrane proteins with misfolded transmembrane domains (ERAD-M). ERAD-L substrates are ubiquitinated through HRD1 in conjunction with the E2 ubiquitin-conjugating enzymes UBC1 and UBC7-CUE1. Ubiquitinated substrates are then removed to the cytosol via the action of the CDC48-NPL4-UFD1 ATPase complex and targeted to the proteasome. ERAD-M substrates are processed by the same HRD1-HRD3 core complex, but only a subset of the other components is required for ERAD-M. Stabilizes the HRD1 ubiquitin-protein ligase. Also functions in recruiting misfolded protein substrates in conjunction with YOS9. The chain is ERAD-associated E3 ubiquitin-protein ligase component HRD3 (HRD3) from Saccharomyces cerevisiae (strain ATCC 204508 / S288c) (Baker's yeast).